We begin with the raw amino-acid sequence, 71 residues long: Small ribosomal subunit protein bS21 (71 aa).

The tract at residues 47 to 71 (RENATRAKRHAKRVARENARNTRLY) is disordered. Basic and acidic residues predominate over residues 60-71 (VARENARNTRLY).

The protein belongs to the bacterial ribosomal protein bS21 family.

In Histophilus somni (strain 129Pt) (Haemophilus somnus), this protein is Small ribosomal subunit protein bS21.